The chain runs to 298 residues: GTPase Era (298 aa).

Residues arginine 7–glutamine 174 enclose the Era-type G domain. Residues glycine 15–serine 22 are G1. GTP is bound at residue glycine 15–serine 22. The G2 stretch occupies residues glutamine 41 to asparagine 45. Residues aspartate 62–glycine 65 are G3. Residues aspartate 62–isoleucine 66 and asparagine 124–aspartate 127 each bind GTP. Positions asparagine 124–aspartate 127 are G4. Residues isoleucine 153 to alanine 155 form a G5 region. The 79-residue stretch at threonine 205–lysine 283 folds into the KH type-2 domain.

This sequence belongs to the TRAFAC class TrmE-Era-EngA-EngB-Septin-like GTPase superfamily. Era GTPase family. Monomer.

It is found in the cytoplasm. The protein localises to the cell inner membrane. An essential GTPase that binds both GDP and GTP, with rapid nucleotide exchange. Plays a role in 16S rRNA processing and 30S ribosomal subunit biogenesis and possibly also in cell cycle regulation and energy metabolism. The sequence is that of GTPase Era from Geobacter metallireducens (strain ATCC 53774 / DSM 7210 / GS-15).